We begin with the raw amino-acid sequence, 188 residues long: Large ribosomal subunit protein uL6 (188 aa).

The protein belongs to the universal ribosomal protein uL6 family.

The sequence is that of Large ribosomal subunit protein uL6 (RPL9) from Tetrahymena thermophila (strain SB210).